Here is an 84-residue protein sequence, read N- to C-terminus: uncharacterized protein (84 aa).

Helical transmembrane passes span 4-20 (AYVLVSGFMLVLGIKYG), 27-49 (VWKAGLIILAGFAVIFAAAWIAF), and 59-81 (IGLAKSLSVVMGLIAGVLSVYVL).

It is found in the cell membrane. This is an uncharacterized protein from Archaeoglobus fulgidus (strain ATCC 49558 / DSM 4304 / JCM 9628 / NBRC 100126 / VC-16).